A 1070-amino-acid chain; its full sequence is DNA-directed RNA polymerase subunit beta (1070 aa).

This sequence belongs to the RNA polymerase beta chain family. In terms of assembly, in plastids the minimal PEP RNA polymerase catalytic core is composed of four subunits: alpha, beta, beta', and beta''. When a (nuclear-encoded) sigma factor is associated with the core the holoenzyme is formed, which can initiate transcription.

It is found in the plastid. Its subcellular location is the chloroplast. The enzyme catalyses RNA(n) + a ribonucleoside 5'-triphosphate = RNA(n+1) + diphosphate. Functionally, DNA-dependent RNA polymerase catalyzes the transcription of DNA into RNA using the four ribonucleoside triphosphates as substrates. In Chloranthus spicatus (Chulantree), this protein is DNA-directed RNA polymerase subunit beta.